The primary structure comprises 271 residues: uncharacterized protein (271 aa).

This is an uncharacterized protein from Galliformes (FAdV-1).